Here is a 283-residue protein sequence, read N- to C-terminus: tRNA-cytidine(32) 2-sulfurtransferase (283 aa).

The short motif at 37 to 42 (SGGKDS) is the PP-loop motif element. The [4Fe-4S] cluster site is built by cysteine 112, cysteine 115, and cysteine 203.

Belongs to the TtcA family. Homodimer. The cofactor is Mg(2+). [4Fe-4S] cluster serves as cofactor.

It is found in the cytoplasm. The enzyme catalyses cytidine(32) in tRNA + S-sulfanyl-L-cysteinyl-[cysteine desulfurase] + AH2 + ATP = 2-thiocytidine(32) in tRNA + L-cysteinyl-[cysteine desulfurase] + A + AMP + diphosphate + H(+). Its pathway is tRNA modification. Functionally, catalyzes the ATP-dependent 2-thiolation of cytidine in position 32 of tRNA, to form 2-thiocytidine (s(2)C32). The sulfur atoms are provided by the cysteine/cysteine desulfurase (IscS) system. In Legionella pneumophila subsp. pneumophila (strain Philadelphia 1 / ATCC 33152 / DSM 7513), this protein is tRNA-cytidine(32) 2-sulfurtransferase.